The following is a 122-amino-acid chain: Large ribosomal subunit protein uL18 (122 aa).

The segment covering 1–16 has biased composition (basic residues); it reads MFKKVDRKASRQKKQM. Residues 1-29 are disordered; the sequence is MFKKVDRKASRQKKQMSIRNKISGTPERP.

This sequence belongs to the universal ribosomal protein uL18 family. In terms of assembly, part of the 50S ribosomal subunit; part of the 5S rRNA/L5/L18/L25 subcomplex. Contacts the 5S and 23S rRNAs.

Its function is as follows. This is one of the proteins that bind and probably mediate the attachment of the 5S RNA into the large ribosomal subunit, where it forms part of the central protuberance. The chain is Large ribosomal subunit protein uL18 from Fusobacterium nucleatum subsp. nucleatum (strain ATCC 25586 / DSM 15643 / BCRC 10681 / CIP 101130 / JCM 8532 / KCTC 2640 / LMG 13131 / VPI 4355).